Reading from the N-terminus, the 302-residue chain is MKIFNWVHKRLHQRVVKDGFAGNVKKSELETNDKDTQAFLKQVGLVNVDGLDGWRDGILTIGTFGFDPLKPSTHQNEYFVLESEEDDQESHGFSHSGNDDDDDDDEHYDHSVEDEELNPLMFTTFEHSFEDIGSNFDAIVQKPADVILTVDGVPLTPFEGSSEISTKPDQSANDQSKNKKGQRITLADLFQADVPDVGQLKLDSGKVQPEMEKKMNARTRSGLAFAKKLIPRVKDDSSPIKNMQRLMRRMLKRKIHPAELEVKIHKSDGQKQPSAVELISNVENDAYESVSLLPIQGAPCVH.

Positions 57 to 63 match the IGT motif motif; it reads GILTIGT. Disordered regions lie at residues 82 to 115 and 159 to 180; these read ESEE…VEDE and EGSS…KNKK. The segment covering 99–115 has biased composition (acidic residues); sequence DDDDDDDEHYDHSVEDE. Polar residues predominate over residues 162-175; the sequence is SEISTKPDQSANDQ.

This sequence belongs to the TAC family. In terms of tissue distribution, highly expressed in flower buds. Expressed in branch attachment sites, vegetative buds and young fruits.

Involved in the regulation of axillary shoot growth angle. Promotes horizontal shoot growth. The sequence is that of Protein TILLER ANGLE CONTROL 1 from Prunus persica (Peach).